The sequence spans 151 residues: Ribonuclease H (151 aa).

In terms of domain architecture, RNase H type-1 spans 1–146; it reads MPDLYAYTDG…ADELARAGMA (146 aa). Positions 9, 52, 74, and 138 each coordinate Mg(2+).

It belongs to the RNase H family. Monomer. Mg(2+) serves as cofactor.

The protein resides in the cytoplasm. It catalyses the reaction Endonucleolytic cleavage to 5'-phosphomonoester.. Endonuclease that specifically degrades the RNA of RNA-DNA hybrids. This chain is Ribonuclease H, found in Cereibacter sphaeroides (strain ATCC 17029 / ATH 2.4.9) (Rhodobacter sphaeroides).